The sequence spans 85 residues: Small ribosomal subunit protein bS20 (85 aa).

The protein belongs to the bacterial ribosomal protein bS20 family.

Binds directly to 16S ribosomal RNA. The protein is Small ribosomal subunit protein bS20 of Borrelia garinii subsp. bavariensis (strain ATCC BAA-2496 / DSM 23469 / PBi) (Borreliella bavariensis).